The chain runs to 271 residues: 3-methyl-2-oxobutanoate hydroxymethyltransferase (271 aa).

Mg(2+) contacts are provided by aspartate 51 and aspartate 90. 3-methyl-2-oxobutanoate is bound by residues 51–52 (DS), aspartate 90, and lysine 118. Glutamate 120 is a Mg(2+) binding site. Glutamate 186 serves as the catalytic Proton acceptor.

This sequence belongs to the PanB family. In terms of assembly, homodecamer; pentamer of dimers. The cofactor is Mg(2+).

The protein resides in the cytoplasm. The enzyme catalyses 3-methyl-2-oxobutanoate + (6R)-5,10-methylene-5,6,7,8-tetrahydrofolate + H2O = 2-dehydropantoate + (6S)-5,6,7,8-tetrahydrofolate. Its pathway is cofactor biosynthesis; (R)-pantothenate biosynthesis; (R)-pantoate from 3-methyl-2-oxobutanoate: step 1/2. Functionally, catalyzes the reversible reaction in which hydroxymethyl group from 5,10-methylenetetrahydrofolate is transferred onto alpha-ketoisovalerate to form ketopantoate. This chain is 3-methyl-2-oxobutanoate hydroxymethyltransferase, found in Xanthomonas euvesicatoria pv. vesicatoria (strain 85-10) (Xanthomonas campestris pv. vesicatoria).